The sequence spans 95 residues: UPF0235 protein PTH_1821 (95 aa).

This sequence belongs to the UPF0235 family.

This chain is UPF0235 protein PTH_1821, found in Pelotomaculum thermopropionicum (strain DSM 13744 / JCM 10971 / SI).